Reading from the N-terminus, the 149-residue chain is 4-hydroxyphenylacetate 3-monooxygenase, reductase component (149 aa).

27-34 contacts FAD; the sequence is ERGMTATA. Ser-37 is a binding site for NAD(+). Residues 48–50, 54–55, and His-80 each bind FAD; these read AVS and KL. NAD(+)-binding positions include His-116 and 137–140; that span reads YFQR.

This sequence belongs to the non-flavoprotein flavin reductase family. HpaC subfamily. Homodimer. 4-HPA 3-monooxygenase consists of a reductase component HpaC and an oxygenase component HpaB.

The catalysed reaction is a reduced flavin + NAD(+) = an oxidized flavin + NADH + 2 H(+). The protein operates within aromatic compound metabolism; 4-hydroxyphenylacetate degradation; pyruvate and succinate semialdehyde from 4-hydroxyphenylacetate: step 1/7. Functionally, catalyzes the reduction of free flavins (FMN, FAD and riboflavin) by NADH. Subsequently, the reduced flavins diffuse to the large HpaB component. It utilizes NADH, but not NADPH as an electron donor, and both FAD and FMN as electron acceptors. This chain is 4-hydroxyphenylacetate 3-monooxygenase, reductase component, found in Thermus thermophilus (strain ATCC 27634 / DSM 579 / HB8).